The primary structure comprises 122 residues: Alkene monooxygenase system, ferredoxin component (122 aa).

Positions 16–111 constitute a Rieske domain; that stretch reads VDVCAVDDLW…LKVEGGRVLI (96 aa). Residues cysteine 55, histidine 57, cysteine 75, and histidine 78 each coordinate [2Fe-2S] cluster.

This sequence belongs to the bacterial ring-hydroxylating dioxygenase ferredoxin component family. In terms of assembly, homodimer. The alkene monooxygenase multicomponent enzyme system is composed of an electron transfer component and a monooxygenase component interacting with the effector protein XamoD. The electron transfer component is composed of a ferredoxin reductase (XamoF) and a ferredoxin (XamoC), and the monooxygenase component is formed by a heterohexamer (dimer of heterotrimers) of two alpha subunits (XamoA), two beta subunits (XamoE) and two gamma subunits (XamoB). The cofactor is [2Fe-2S] cluster.

The protein localises to the cytoplasm. Its function is as follows. Ferredoxin component of the alkene monooxygenase multicomponent enzyme system which catalyzes the O2- and NADH-dependent epoxidation of short chain (C2 to C6) alkenes to their corresponding epoxides. Functions as an intermediate electron transfer protein. This Xanthobacter autotrophicus (strain ATCC BAA-1158 / Py2) protein is Alkene monooxygenase system, ferredoxin component.